The primary structure comprises 147 residues: MKVILKEDVHGLGRAGQTINVKDGYARNYLLPRGLALIADEKNLKVLEYQKKKFEEQAKKKRQDAESIAERLSALELTIKAKAGEDQKLFGSITAKDIAELLQKEGFLVDKKQINISEPIKRVGEHEVEVKLLSNLSAKLKINVVAE.

Belongs to the bacterial ribosomal protein bL9 family.

Binds to the 23S rRNA. The sequence is that of Large ribosomal subunit protein bL9 from Thermodesulfovibrio yellowstonii (strain ATCC 51303 / DSM 11347 / YP87).